The primary structure comprises 231 residues: Large ribosomal subunit protein uL1 (231 aa).

This sequence belongs to the universal ribosomal protein uL1 family. Part of the 50S ribosomal subunit.

Its function is as follows. Binds directly to 23S rRNA. The L1 stalk is quite mobile in the ribosome, and is involved in E site tRNA release. Functionally, protein L1 is also a translational repressor protein, it controls the translation of the L11 operon by binding to its mRNA. This is Large ribosomal subunit protein uL1 from Paracidovorax citrulli (strain AAC00-1) (Acidovorax citrulli).